Consider the following 102-residue polypeptide: UV-induced protein uvi31 (102 aa).

It belongs to the BolA/IbaG family.

Its subcellular location is the mitochondrion matrix. The protein resides in the cytoplasm. It localises to the nucleus. Functionally, acts as a mitochondrial iron-sulfur (Fe-S) cluster assembly factor that facilitates [4Fe-4S] cluster insertion into a subset of mitochondrial proteins such as lipoyl synthase (LS) and succinate dehydrogenase (SDH). Required during the last step of iron-sulfur protein assembly when the iron-sulfur cluster is inserted into the target protein. Probably acts together with the monothiol glutaredoxin grx5. Not required for [2Fe-2S] cluster insertion into mitochondrial proteins. May be involved in control of cell division, especially during the resumption from cell cycle arrest. In Schizosaccharomyces pombe (strain 972 / ATCC 24843) (Fission yeast), this protein is UV-induced protein uvi31.